The sequence spans 31 residues: Cyclotide vico-A (31 aa).

A cross-link (cyclopeptide (Gly-Asn)) is located at residues 1 to 31; that stretch reads GSIPCAESCVYIPCFTGIAGCSCKNKVCYYN. 3 disulfides stabilise this stretch: C5–C21, C9–C23, and C14–C28.

This sequence belongs to the cyclotide family. Bracelet subfamily. Post-translationally, this is a cyclic peptide.

Its function is as follows. Probably participates in a plant defense mechanism. The chain is Cyclotide vico-A from Viola cotyledon (Violeta).